The chain runs to 399 residues: Cyclic dehypoxanthine futalosine synthase (399 aa).

Residues 56-288 (ATYIIERNIN…IAIARVFLDN (233 aa)) form the Radical SAM core domain. Cys-70, Cys-74, and Cys-77 together coordinate [4Fe-4S] cluster.

It belongs to the radical SAM superfamily. MqnC family. [4Fe-4S] cluster is required as a cofactor.

The catalysed reaction is dehypoxanthine futalosine + S-adenosyl-L-methionine = cyclic dehypoxanthinylfutalosinate + 5'-deoxyadenosine + L-methionine + H(+). Its pathway is quinol/quinone metabolism; menaquinone biosynthesis. Radical SAM enzyme that catalyzes the cyclization of dehypoxanthine futalosine (DHFL) into cyclic dehypoxanthine futalosine (CDHFL), a step in the biosynthesis of menaquinone (MK, vitamin K2). In Streptomyces coelicolor (strain ATCC BAA-471 / A3(2) / M145), this protein is Cyclic dehypoxanthine futalosine synthase.